The primary structure comprises 258 residues: RIO-type serine/threonine-protein kinase Rio1 (258 aa).

Residues 49 to 258 form the Protein kinase domain; the sequence is TAMGGVISTG…EEMLKEVKGE (210 aa). ATP contacts are provided by residues 55–63 and K80; that span reads ISTGKEANV. A Phosphoserine; by autocatalysis modification is found at S108. Residues E148 and I150 each coordinate ATP. Residue D196 is the Proton acceptor of the active site. ATP contacts are provided by Y200, N201, and D212. Residues N201 and D212 each coordinate Mg(2+). D212 (4-aspartylphosphate intermediate) is an active-site residue.

Belongs to the protein kinase superfamily. RIO-type Ser/Thr kinase family. It depends on Mg(2+) as a cofactor.

The enzyme catalyses L-seryl-[protein] + ATP = O-phospho-L-seryl-[protein] + ADP + H(+). The catalysed reaction is L-threonyl-[protein] + ATP = O-phospho-L-threonyl-[protein] + ADP + H(+). Functionally, autophosphorylation of the rio1 protein is not necessary for maintenance of kinase activity. Prefers ATP over GTP. The yeast ortholog is involved in ribosome biogenesis. Despite the protein kinase domain is proposed to act predominantly as an ATPase. The protein is RIO-type serine/threonine-protein kinase Rio1 (rio1) of Archaeoglobus fulgidus (strain ATCC 49558 / DSM 4304 / JCM 9628 / NBRC 100126 / VC-16).